A 517-amino-acid chain; its full sequence is Beta-glucosidase 1 (517 aa).

Residues 1-22 (MEDVLTLITMIVLLLLAFHGFG) form the signal peptide. Residues Gln48, His145, and 190 to 191 (NE) each bind a beta-D-glucoside. Glu191 acts as the Proton donor in catalysis. A disulfide bridge links Cys210 with Cys217. N-linked (GlcNAc...) asparagine glycans are attached at residues Asn216 and Asn221. Tyr333 and Glu406 together coordinate a beta-D-glucoside. Catalysis depends on Glu406, which acts as the Nucleophile. The N-linked (GlcNAc...) asparagine glycan is linked to Asn441. Positions 451 and 467 each coordinate a beta-D-glucoside. N-linked (GlcNAc...) asparagine glycosylation is found at Asn473 and Asn512.

It belongs to the glycosyl hydrolase 1 family.

The catalysed reaction is Hydrolysis of terminal, non-reducing beta-D-glucosyl residues with release of beta-D-glucose.. In Arabidopsis thaliana (Mouse-ear cress), this protein is Beta-glucosidase 1.